We begin with the raw amino-acid sequence, 848 residues long: Adenylate cyclase (848 aa).

Positions 1-535 are catalytic; the sequence is MYLYIETLKQ…DVSHHFPLRL (535 aa). Positions 541–848 are regulatory; it reads KALYSPCEIR…DTPLLQQYFS (308 aa). Residue His-609 is modified to Phosphohistidine; by CRR.

It belongs to the adenylyl cyclase class-1 family.

The protein localises to the cytoplasm. It catalyses the reaction ATP = 3',5'-cyclic AMP + diphosphate. The protein is Adenylate cyclase (cyaA) of Shigella flexneri.